The sequence spans 507 residues: Histidine ammonia-lyase (507 aa).

The segment at residues 141-143 (ASG) is a cross-link (5-imidazolinone (Ala-Gly)). Serine 142 is subject to 2,3-didehydroalanine (Ser).

It belongs to the PAL/histidase family. In terms of processing, contains an active site 4-methylidene-imidazol-5-one (MIO), which is formed autocatalytically by cyclization and dehydration of residues Ala-Ser-Gly.

The protein localises to the cytoplasm. The enzyme catalyses L-histidine = trans-urocanate + NH4(+). The protein operates within amino-acid degradation; L-histidine degradation into L-glutamate; N-formimidoyl-L-glutamate from L-histidine: step 1/3. This is Histidine ammonia-lyase from Paraburkholderia phytofirmans (strain DSM 17436 / LMG 22146 / PsJN) (Burkholderia phytofirmans).